The primary structure comprises 275 residues: Rhamnulose-1-phosphate aldolase (275 aa).

Residue Glu117 is part of the active site. Positions 141, 143, and 212 each coordinate Zn(2+).

This sequence belongs to the aldolase class II family. RhaD subfamily. In terms of assembly, homotetramer. Zn(2+) is required as a cofactor.

It is found in the cytoplasm. It catalyses the reaction L-rhamnulose 1-phosphate = (S)-lactaldehyde + dihydroxyacetone phosphate. It functions in the pathway carbohydrate degradation; L-rhamnose degradation; glycerone phosphate from L-rhamnose: step 3/3. Functionally, catalyzes the reversible cleavage of L-rhamnulose-1-phosphate to dihydroxyacetone phosphate (DHAP) and L-lactaldehyde. In Salmonella paratyphi C (strain RKS4594), this protein is Rhamnulose-1-phosphate aldolase.